We begin with the raw amino-acid sequence, 214 residues long: Thioredoxin-like 4, chloroplastic (214 aa).

Low complexity predominate over residues 1 to 20 (MITASLLPLPATSSSSGRRS). The interval 1 to 68 (MITASLLPLP…STNGSLPGLP (68 aa)) is disordered. Residues 1-71 (MITASLLPLP…GSLPGLPPVV (71 aa)) constitute a chloroplast transit peptide. Residues 21–34 (LPPPTTTFPRPPPP) show a composition bias toward pro residues. Over residues 42 to 53 (SSSSSSASSTES) the composition is skewed to low complexity. The region spanning 72-199 (VEEEEEEFCP…IIAAIQKYTA (128 aa)) is the Thioredoxin domain. Active-site nucleophile residues include Cys117 and Cys120. The cysteines at positions 117 and 120 are disulfide-linked.

The protein belongs to the thioredoxin family.

It localises to the plastid. Its subcellular location is the chloroplast. In terms of biological role, probable thiol-disulfide oxidoreductase that may participate in various redox reactions. In Oryza sativa subsp. japonica (Rice), this protein is Thioredoxin-like 4, chloroplastic.